The primary structure comprises 255 residues: Uracil-DNA glycosylase (255 aa).

The Proton acceptor role is filled by Asp93.

The protein belongs to the uracil-DNA glycosylase (UDG) superfamily. UNG family.

It localises to the host nucleus. It carries out the reaction Hydrolyzes single-stranded DNA or mismatched double-stranded DNA and polynucleotides, releasing free uracil.. Its function is as follows. Excises uracil residues from the DNA which can arise as a result of misincorporation of dUMP residues by DNA polymerase or deamination of cytosines. Therefore may reduce deleterious uracil incorporation into the viral genome, particularly in terminally differentiated cells which lack DNA repair enzymes. This Human herpesvirus 6A (strain Uganda-1102) (HHV-6 variant A) protein is Uracil-DNA glycosylase (U81).